The sequence spans 196 residues: Rho-related protein racA (196 aa).

The GTP site is built by alanine 13, glycine 15, lysine 16, threonine 17, cysteine 18, tyrosine 32, threonine 35, glycine 60, lysine 116, aspartate 118, and alanine 159. Threonine 17 is a Mg(2+) binding site. Short sequence motifs (switch) lie at residues 26–37 (NAFPNEYIPTVF) and 57–75 (DTAG…YPQT). Residue threonine 35 participates in Mg(2+) binding. A Cysteine methyl ester modification is found at cysteine 193. A lipid anchor (S-geranylgeranyl cysteine) is attached at cysteine 193. Residues 194–196 (LLF) constitute a propeptide, removed in mature form.

This sequence belongs to the small GTPase superfamily. Rho family. Interacts (GTP-bound form) with PAK2 (via CRIB domain). It depends on Mg(2+) as a cofactor.

The protein localises to the cell membrane. It localises to the cytoplasm. It is found in the cytoskeleton. It catalyses the reaction GTP + H2O = GDP + phosphate + H(+). Regulated by guanine nucleotide exchange factors (GEFs) which promote the exchange of bound GDP for free GTP, GTPase activating proteins (GAPs) which increase the GTP hydrolysis activity, and GDP dissociation inhibitors which inhibit the dissociation of the nucleotide from the GTPase. In terms of biological role, small GTPase which cycles between active GTP-bound and inactive GDP-bound states. Involved in cytoskeleton remodeling. Plays a role in phagocytosis of bacteria and host erythrocytes. Involved in capping of surface receptors. May be involved in cytokinesis. The protein is Rho-related protein racA of Entamoeba histolytica (strain ATCC 30459 / HM-1:IMSS / ABRM).